The sequence spans 504 residues: Probable cytosol aminopeptidase (504 aa).

Mn(2+) contacts are provided by Lys-268 and Asp-273. Lys-280 is a catalytic residue. Mn(2+) contacts are provided by Asp-291, Asp-350, and Glu-352. The active site involves Arg-354.

This sequence belongs to the peptidase M17 family. Mn(2+) is required as a cofactor.

The protein resides in the cytoplasm. The catalysed reaction is Release of an N-terminal amino acid, Xaa-|-Yaa-, in which Xaa is preferably Leu, but may be other amino acids including Pro although not Arg or Lys, and Yaa may be Pro. Amino acid amides and methyl esters are also readily hydrolyzed, but rates on arylamides are exceedingly low.. The enzyme catalyses Release of an N-terminal amino acid, preferentially leucine, but not glutamic or aspartic acids.. Its function is as follows. Presumably involved in the processing and regular turnover of intracellular proteins. Catalyzes the removal of unsubstituted N-terminal amino acids from various peptides. The chain is Probable cytosol aminopeptidase from Psychromonas ingrahamii (strain DSM 17664 / CCUG 51855 / 37).